The chain runs to 340 residues: UDP-glucose 4-epimerase (340 aa).

Residues 12 to 13, 32 to 37, 59 to 60, 81 to 85, N100, S125, Y150, K154, and F179 each bind NAD(+); these read FI, DNYGNS, DV, and FAGLK. Substrate contacts are provided by S125 and Y150. Y150 acts as the Proton acceptor in catalysis. Residues N180, 200–201, 217–219, R232, and 292–295 contribute to the substrate site; these read NL, QVY, and RPGD.

The protein belongs to the NAD(P)-dependent epimerase/dehydratase family. As to quaternary structure, homodimer. The cofactor is NAD(+).

The enzyme catalyses UDP-alpha-D-glucose = UDP-alpha-D-galactose. Its pathway is carbohydrate metabolism; galactose metabolism. In terms of biological role, involved in the metabolism of galactose. Catalyzes the conversion of UDP-galactose (UDP-Gal) to UDP-glucose (UDP-Glc) through a mechanism involving the transient reduction of NAD. Can also epimerize UDP-GalNAc to UDP-GlcNAc. Involved in the lacto-N-biose I/galacto-N-biose (LNB/GNB) degradation pathway, which is important for host intestinal colonization by bifidobacteria. The polypeptide is UDP-glucose 4-epimerase (lnpD) (Bifidobacterium longum subsp. longum (strain ATCC 15707 / DSM 20219 / JCM 1217 / NCTC 11818 / E194b)).